The chain runs to 502 residues: UPF0371 protein CLM_0396 (502 aa).

This sequence belongs to the UPF0371 family.

The protein is UPF0371 protein CLM_0396 of Clostridium botulinum (strain Kyoto / Type A2).